A 203-amino-acid chain; its full sequence is Cold-regulated 413 plasma membrane protein 2 (203 aa).

At 1 to 43 the chain is on the extracellular side; sequence MGRMDYLAMKTDDVDTVALVNSDMEELKVAAKKLFSDVSKLGG. A helical membrane pass occupies residues 44-64; sequence LGFGVSFLKFLASFAAIYLLI. Residues 65–74 lie on the Cytoplasmic side of the membrane; sequence LDRTNWKTKM. The chain crosses the membrane as a helical span at residues 75–95; that stretch reads LTSLLIPYIFLSLPSVIFNFL. The Extracellular portion of the chain corresponds to 96–98; it reads SGD. Residues 99-119 form a helical membrane-spanning segment; that stretch reads VGKWIAFVAVVLRLFFPKHFP. Residue D120 is a topological domain, cytoplasmic. Residues 121 to 141 form a helical membrane-spanning segment; sequence WLEMPGSLILLLVVSPHFLAH. Over 142-144 the chain is Extracellular; the sequence is HIR. A helical transmembrane segment spans residues 145-165; the sequence is GTWIGTVISLFIGCYLLQEHI. Residues 166-179 lie on the Cytoplasmic side of the membrane; that stretch reads RASGGFRNSFTQPR. Residues 180–200 traverse the membrane as a helical segment; sequence GVSNTLGIILLLVYPVWALIV. Topologically, residues 201-203 are extracellular; sequence RVM.

It belongs to the Cold-regulated 413 protein family.

The protein localises to the cell membrane. This chain is Cold-regulated 413 plasma membrane protein 2 (COR413PM2), found in Arabidopsis thaliana (Mouse-ear cress).